Consider the following 457-residue polypeptide: ATP synthase subunit beta (457 aa).

Residue 147-154 (GGAGVGKT) participates in ATP binding.

This sequence belongs to the ATPase alpha/beta chains family. As to quaternary structure, F-type ATPases have 2 components, CF(1) - the catalytic core - and CF(0) - the membrane proton channel. CF(1) has five subunits: alpha(3), beta(3), gamma(1), delta(1), epsilon(1). CF(0) has three main subunits: a(1), b(2) and c(9-12). The alpha and beta chains form an alternating ring which encloses part of the gamma chain. CF(1) is attached to CF(0) by a central stalk formed by the gamma and epsilon chains, while a peripheral stalk is formed by the delta and b chains.

The protein resides in the cell inner membrane. The enzyme catalyses ATP + H2O + 4 H(+)(in) = ADP + phosphate + 5 H(+)(out). Produces ATP from ADP in the presence of a proton gradient across the membrane. The catalytic sites are hosted primarily by the beta subunits. In Histophilus somni (strain 129Pt) (Haemophilus somnus), this protein is ATP synthase subunit beta.